Reading from the N-terminus, the 280-residue chain is UPF0328 protein ECU06_0020/ECU06_1700 (280 aa).

The protein belongs to the UPF0328 family.

This chain is UPF0328 protein ECU06_0020/ECU06_1700, found in Encephalitozoon cuniculi (strain GB-M1) (Microsporidian parasite).